The following is a 150-amino-acid chain: Cytochrome c oxidase subunit 5A, mitochondrial (150 aa).

The transit peptide at 1 to 41 (MLGAALRRCAVAATSRAGPRGLLHSAPNPGPAAAIQSVRCY) directs the protein to the mitochondrion. The short motif at 2–17 (LGAALRRCAVAATSRA) is the SIFI-degron element. N6-acetyllysine occurs at positions 87 and 113. Position 141 is a phosphothreonine (Thr-141).

Belongs to the cytochrome c oxidase subunit 5A family. Component of the cytochrome c oxidase (complex IV, CIV), a multisubunit enzyme composed of 14 subunits. The complex is composed of a catalytic core of 3 subunits MT-CO1, MT-CO2 and MT-CO3, encoded in the mitochondrial DNA, and 11 supernumerary subunits COX4I, COX5A, COX5B, COX6A, COX6B, COX6C, COX7A, COX7B, COX7C, COX8 and NDUFA4, which are encoded in the nuclear genome. The complex exists as a monomer or a dimer and forms supercomplexes (SCs) in the inner mitochondrial membrane with NADH-ubiquinone oxidoreductase (complex I, CI) and ubiquinol-cytochrome c oxidoreductase (cytochrome b-c1 complex, complex III, CIII), resulting in different assemblies (supercomplex SCI(1)III(2)IV(1) and megacomplex MCI(2)III(2)IV(2)). Interacts with AFG1L. Interacts with RAB5IF. In response to mitochondrial stress, the precursor protein is ubiquitinated by the SIFI complex in the cytoplasm before mitochondrial import, leading to its degradation. Within the SIFI complex, UBR4 initiates ubiquitin chain that are further elongated or branched by KCMF1.

Its subcellular location is the mitochondrion inner membrane. The protein operates within energy metabolism; oxidative phosphorylation. Functionally, component of the cytochrome c oxidase, the last enzyme in the mitochondrial electron transport chain which drives oxidative phosphorylation. The respiratory chain contains 3 multisubunit complexes succinate dehydrogenase (complex II, CII), ubiquinol-cytochrome c oxidoreductase (cytochrome b-c1 complex, complex III, CIII) and cytochrome c oxidase (complex IV, CIV), that cooperate to transfer electrons derived from NADH and succinate to molecular oxygen, creating an electrochemical gradient over the inner membrane that drives transmembrane transport and the ATP synthase. Cytochrome c oxidase is the component of the respiratory chain that catalyzes the reduction of oxygen to water. Electrons originating from reduced cytochrome c in the intermembrane space (IMS) are transferred via the dinuclear copper A center (CU(A)) of subunit 2 and heme A of subunit 1 to the active site in subunit 1, a binuclear center (BNC) formed by heme A3 and copper B (CU(B)). The BNC reduces molecular oxygen to 2 water molecules using 4 electrons from cytochrome c in the IMS and 4 protons from the mitochondrial matrix. The chain is Cytochrome c oxidase subunit 5A, mitochondrial (COX5A) from Saguinus labiatus (Red-chested mustached tamarin).